Reading from the N-terminus, the 84-residue chain is Exodeoxyribonuclease 7 small subunit (84 aa).

Belongs to the XseB family. Heterooligomer composed of large and small subunits.

It is found in the cytoplasm. The catalysed reaction is Exonucleolytic cleavage in either 5'- to 3'- or 3'- to 5'-direction to yield nucleoside 5'-phosphates.. In terms of biological role, bidirectionally degrades single-stranded DNA into large acid-insoluble oligonucleotides, which are then degraded further into small acid-soluble oligonucleotides. The chain is Exodeoxyribonuclease 7 small subunit from Haemophilus influenzae (strain 86-028NP).